The following is a 323-amino-acid chain: MTKTFANPQLTKNGELKHLLSIEGLSRDILTHILDTAKQFVSVSDADREVKKVPLLRGKSVFNLFFENSTRTRTTFEIAAKRLSADVINLNINASSTSKGESLLDTINNLSAMQADMFVVRHASSGAPYLIAEHVAPHVHVINAGDGRHAHPTQGLLDMFTIRHYKKDFSNLTVAIVGDILHSRVARSDIHALTTLGCAEVRAIGPRTLLPSGLEHMGVRVFHSMEEGLKGVDAVIMLRLQNERMSGALLPSAQEYFKAYGLTQERLALAKPDAIVMHPGPMNRGVEIDSAVADGVQSVILNQVTFGIAVRMAVMGIVAGNND.

Residues Arg71 and Thr72 each coordinate carbamoyl phosphate. Position 99 (Lys99) interacts with L-aspartate. Residues Arg121, His151, and Gln154 each contribute to the carbamoyl phosphate site. L-aspartate-binding residues include Arg184 and Arg239. Carbamoyl phosphate-binding residues include Gly280 and Pro281.

The protein belongs to the aspartate/ornithine carbamoyltransferase superfamily. ATCase family. As to quaternary structure, heterododecamer (2C3:3R2) of six catalytic PyrB chains organized as two trimers (C3), and six regulatory PyrI chains organized as three dimers (R2).

It catalyses the reaction carbamoyl phosphate + L-aspartate = N-carbamoyl-L-aspartate + phosphate + H(+). It functions in the pathway pyrimidine metabolism; UMP biosynthesis via de novo pathway; (S)-dihydroorotate from bicarbonate: step 2/3. Its function is as follows. Catalyzes the condensation of carbamoyl phosphate and aspartate to form carbamoyl aspartate and inorganic phosphate, the committed step in the de novo pyrimidine nucleotide biosynthesis pathway. This Ralstonia nicotianae (strain ATCC BAA-1114 / GMI1000) (Ralstonia solanacearum) protein is Aspartate carbamoyltransferase catalytic subunit.